We begin with the raw amino-acid sequence, 677 residues long: Protein asunder (677 aa).

Residues 515–540 (RLKLSKAKDQYRLLYRELEQLIQLNS) adopt a coiled-coil conformation. Low complexity predominate over residues 578–598 (ESPLSPERLEPTSSSSSNSLL). The interval 578–604 (ESPLSPERLEPTSSSSSNSLLKARKRR) is disordered. The Nuclear localization signal (NLS) signature appears at 598 to 604 (LKARKRR).

It belongs to the Integrator subunit 13 family. Belongs to the multiprotein complex Integrator, at least composed of IntS1, IntS2, IntS3, IntS4, omd/IntS5, IntS6, defl/IntS7, IntS8, IntS9, IntS10, IntS11, IntS12, asun/IntS13, IntS14 and IntS15. The core complex associates with protein phosphatase 2A subunits mts/PP2A and Pp2A-29B, to form the Integrator-PP2A (INTAC) complex. Phosphorylated.

Its subcellular location is the nucleus. It localises to the cytoplasm. The protein resides in the perinuclear region. Its function is as follows. Component of the integrator complex, a multiprotein complex that terminates RNA polymerase II (Pol II) transcription in the promoter-proximal region of genes. The integrator complex provides a quality checkpoint during transcription elongation by driving premature transcription termination of transcripts that are unfavorably configured for transcriptional elongation: the complex terminates transcription by (1) catalyzing dephosphorylation of the C-terminal domain (CTD) of Pol II subunit Polr2A/Rbp1 and Spt5, and (2) degrading the exiting nascent RNA transcript via endonuclease activity. The integrator complex is also involved in the 3'-end processing of the U7 snRNA, and also the spliceosomal snRNAs U1, U2, U4 and U5. This is Protein asunder (asun) from Drosophila willistoni (Fruit fly).